A 117-amino-acid chain; its full sequence is UPF0102 protein FTN_0424 (117 aa).

Belongs to the UPF0102 family.

In Francisella tularensis subsp. novicida (strain U112), this protein is UPF0102 protein FTN_0424.